Here is a 274-residue protein sequence, read N- to C-terminus: Exosome complex component Rrp42 (274 aa).

Belongs to the RNase PH family. Rrp42 subfamily. Component of the archaeal exosome complex. Forms a hexameric ring-like arrangement composed of 3 Rrp41-Rrp42 heterodimers. The hexameric ring associates with a trimer of Rrp4 and/or Csl4 subunits.

The protein localises to the cytoplasm. Functionally, non-catalytic component of the exosome, which is a complex involved in RNA degradation. Contributes to the structuring of the Rrp41 active site. This Pyrococcus horikoshii (strain ATCC 700860 / DSM 12428 / JCM 9974 / NBRC 100139 / OT-3) protein is Exosome complex component Rrp42.